A 207-amino-acid chain; its full sequence is Tetrathionate reductase subunit B (207 aa).

Positions 1–28 (MLISKTLIFYQVVNIVSQKGSGKRRWKM) are cleaved as a signal peptide. 4Fe-4S ferredoxin-type domains follow at residues 34–63 (YVYVVDVSKCYGCLSCVAACAAENNVPVGY), 75–106 (GRVAFVPKICNHCDNPSCVHACPVNATYKTEE), and 107–136 (GLVLIDDEICIGCGACIQACPYGARFRNPV). The [4Fe-4S] cluster site is built by cysteine 43, cysteine 46, cysteine 49, cysteine 53, cysteine 84, cysteine 87, cysteine 92, cysteine 96, cysteine 116, cysteine 119, cysteine 122, cysteine 126, cysteine 143, cysteine 146, cysteine 157, and cysteine 161.

Probably composed of three subunits: TtrA, TtrB and TtrC.

It localises to the cell membrane. In terms of biological role, part of a membrane-bound tetrathionate reductase that catalyzes the reduction of tetrathionate to thiosulfate. TtrB is probably involved in transfer of electrons from TtrC to TtrA. This is Tetrathionate reductase subunit B (ttrB) from Archaeoglobus fulgidus (strain ATCC 49558 / DSM 4304 / JCM 9628 / NBRC 100126 / VC-16).